The sequence spans 351 residues: Sulfate/thiosulfate import ATP-binding protein CysA (351 aa).

Residues 5–235 (IVVADATKRY…PANAFVMSFL (231 aa)) enclose the ABC transporter domain. 37 to 44 (GPSGSGKS) is a binding site for ATP.

Belongs to the ABC transporter superfamily. Sulfate/tungstate importer (TC 3.A.1.6) family. The complex is composed of two ATP-binding proteins (CysA), two transmembrane proteins (CysT and CysW) and a solute-binding protein (CysP).

It localises to the cell membrane. It carries out the reaction sulfate(out) + ATP + H2O = sulfate(in) + ADP + phosphate + H(+). The enzyme catalyses thiosulfate(out) + ATP + H2O = thiosulfate(in) + ADP + phosphate + H(+). In terms of biological role, part of the ABC transporter complex CysAWTP involved in sulfate/thiosulfate import. Responsible for energy coupling to the transport system. The sequence is that of Sulfate/thiosulfate import ATP-binding protein CysA from Mycobacterium bovis (strain ATCC BAA-935 / AF2122/97).